We begin with the raw amino-acid sequence, 441 residues long: Ribosomal protein uS12 methylthiotransferase RimO (441 aa).

The MTTase N-terminal domain maps to 7–117; it reads ASIAMISLGC…VVLEVHRAAP (111 aa). [4Fe-4S] cluster is bound by residues cysteine 16, cysteine 52, cysteine 81, cysteine 150, cysteine 154, and cysteine 157. The 238-residue stretch at 136–373 folds into the Radical SAM core domain; the sequence is LTPRHYAYLK…MAHQQAISAA (238 aa). Positions 376–441 constitute a TRAM domain; it reads QTRVGREIDV…DEYDLHGDAV (66 aa).

This sequence belongs to the methylthiotransferase family. RimO subfamily. [4Fe-4S] cluster is required as a cofactor.

It localises to the cytoplasm. The enzyme catalyses L-aspartate(89)-[ribosomal protein uS12]-hydrogen + (sulfur carrier)-SH + AH2 + 2 S-adenosyl-L-methionine = 3-methylsulfanyl-L-aspartate(89)-[ribosomal protein uS12]-hydrogen + (sulfur carrier)-H + 5'-deoxyadenosine + L-methionine + A + S-adenosyl-L-homocysteine + 2 H(+). Catalyzes the methylthiolation of an aspartic acid residue of ribosomal protein uS12. In Bordetella petrii (strain ATCC BAA-461 / DSM 12804 / CCUG 43448), this protein is Ribosomal protein uS12 methylthiotransferase RimO.